A 232-amino-acid chain; its full sequence is MLEGIFDINHIFDEDGIKTLKRFGWDGSVAVQNHNEYSEEIINSAVEYGEKHDFKVFSGVKISTKNQNEMEKAVKKYRNKADILLVEGGDIKINRRVLEMNDVDILSTPELNRMDNGLDHILARLGSTNRVAIELNFGNLLKSRNYDRSKILWAFQRNLKLAKKYDTPVVISSGASDIYGIKAPGDLRGFLNTVTDPLYSKKIMETTSKIIDYRLYLKKDTVLTLGIEIVEE.

Belongs to the eukaryotic/archaeal RNase P protein component 3 family. In terms of assembly, consists of a catalytic RNA component and at least 4-5 protein subunits.

Its subcellular location is the cytoplasm. It catalyses the reaction Endonucleolytic cleavage of RNA, removing 5'-extranucleotides from tRNA precursor.. Its function is as follows. Part of ribonuclease P, a protein complex that generates mature tRNA molecules by cleaving their 5'-ends. This is Ribonuclease P protein component 3 from Methanococcus maripaludis (strain C7 / ATCC BAA-1331).